Reading from the N-terminus, the 254-residue chain is Imidazole glycerol phosphate synthase subunit HisF (254 aa).

Active-site residues include D12 and D131.

Belongs to the HisA/HisF family. As to quaternary structure, heterodimer of HisH and HisF.

It is found in the cytoplasm. The enzyme catalyses 5-[(5-phospho-1-deoxy-D-ribulos-1-ylimino)methylamino]-1-(5-phospho-beta-D-ribosyl)imidazole-4-carboxamide + L-glutamine = D-erythro-1-(imidazol-4-yl)glycerol 3-phosphate + 5-amino-1-(5-phospho-beta-D-ribosyl)imidazole-4-carboxamide + L-glutamate + H(+). It functions in the pathway amino-acid biosynthesis; L-histidine biosynthesis; L-histidine from 5-phospho-alpha-D-ribose 1-diphosphate: step 5/9. IGPS catalyzes the conversion of PRFAR and glutamine to IGP, AICAR and glutamate. The HisF subunit catalyzes the cyclization activity that produces IGP and AICAR from PRFAR using the ammonia provided by the HisH subunit. The chain is Imidazole glycerol phosphate synthase subunit HisF from Leifsonia xyli subsp. xyli (strain CTCB07).